We begin with the raw amino-acid sequence, 571 residues long: 2-succinyl-5-enolpyruvyl-6-hydroxy-3-cyclohexene-1-carboxylate synthase (571 aa).

This sequence belongs to the TPP enzyme family. MenD subfamily. In terms of assembly, homodimer. Mg(2+) is required as a cofactor. Requires Mn(2+) as cofactor. The cofactor is thiamine diphosphate.

It catalyses the reaction isochorismate + 2-oxoglutarate + H(+) = 5-enolpyruvoyl-6-hydroxy-2-succinyl-cyclohex-3-ene-1-carboxylate + CO2. It functions in the pathway quinol/quinone metabolism; 1,4-dihydroxy-2-naphthoate biosynthesis; 1,4-dihydroxy-2-naphthoate from chorismate: step 2/7. It participates in quinol/quinone metabolism; menaquinone biosynthesis. Its function is as follows. Catalyzes the thiamine diphosphate-dependent decarboxylation of 2-oxoglutarate and the subsequent addition of the resulting succinic semialdehyde-thiamine pyrophosphate anion to isochorismate to yield 2-succinyl-5-enolpyruvyl-6-hydroxy-3-cyclohexene-1-carboxylate (SEPHCHC). In Vibrio parahaemolyticus serotype O3:K6 (strain RIMD 2210633), this protein is 2-succinyl-5-enolpyruvyl-6-hydroxy-3-cyclohexene-1-carboxylate synthase.